The following is a 211-amino-acid chain: PDR1 up-regulated protein 1 (211 aa).

2 helical membrane-spanning segments follow: residues 45 to 67 (ISKA…PYAY) and 82 to 99 (RTIL…NVAA).

This sequence belongs to the PUP1 family.

The protein localises to the mitochondrion membrane. Mitochondrial protein that contributes to the enhanced virulence of C.glabrata strains that acquired azole resistance. The protein is PDR1 up-regulated protein 1 of Candida glabrata (strain ATCC 2001 / BCRC 20586 / JCM 3761 / NBRC 0622 / NRRL Y-65 / CBS 138) (Yeast).